Consider the following 473-residue polypeptide: PEP-dependent dihydroxyacetone kinase, phosphoryl donor subunit DhaM (473 aa).

A PTS EIIA type-4 domain is found at 1 to 137 (MVNLVIVSHS…LAAKQAQLGI (137 aa)). H9 (tele-phosphohistidine intermediate) is an active-site residue. Positions 155–242 (ARSVTVTIRN…SLAAEDFGEH (88 aa)) constitute an HPr domain. The active-site Pros-phosphohistidine intermediate is the H169. Positions 266-472 (PLPLAQPARH…IDPAAQRVSC (207 aa)) are PTS EI-like, N-terminal part. The Tele-phosphohistidine intermediate role is filled by H432.

The protein belongs to the PEP-utilizing enzyme family. Homodimer. The dihydroxyacetone kinase complex is composed of a homodimer of DhaM, a homodimer of DhaK and the subunit DhaL.

The catalysed reaction is dihydroxyacetone + phosphoenolpyruvate = dihydroxyacetone phosphate + pyruvate. In terms of biological role, component of the dihydroxyacetone kinase complex, which is responsible for the phosphoenolpyruvate (PEP)-dependent phosphorylation of dihydroxyacetone. DhaM serves as the phosphoryl donor. Is phosphorylated by phosphoenolpyruvate in an EI- and HPr-dependent reaction, and a phosphorelay system on histidine residues finally leads to phosphoryl transfer to DhaL and dihydroxyacetone. The chain is PEP-dependent dihydroxyacetone kinase, phosphoryl donor subunit DhaM from Pantoea ananatis (strain LMG 20103).